A 421-amino-acid chain; its full sequence is U-box domain-containing protein 26 (421 aa).

The region spanning 13 to 87 is the U-box domain; it reads QIPYHFRCPI…QEWCVANRSN (75 aa).

The catalysed reaction is S-ubiquitinyl-[E2 ubiquitin-conjugating enzyme]-L-cysteine + [acceptor protein]-L-lysine = [E2 ubiquitin-conjugating enzyme]-L-cysteine + N(6)-ubiquitinyl-[acceptor protein]-L-lysine.. Its pathway is protein modification; protein ubiquitination. Functions as an E3 ubiquitin ligase. In Arabidopsis thaliana (Mouse-ear cress), this protein is U-box domain-containing protein 26 (PUB26).